Here is a 438-residue protein sequence, read N- to C-terminus: Xylose isomerase (438 aa).

Residues His-103 and Asp-106 contribute to the active site. Mg(2+) is bound by residues Glu-234, Glu-270, His-273, Asp-298, Asp-309, Asp-311, and Asp-341.

It belongs to the xylose isomerase family. In terms of assembly, homotetramer. The cofactor is Mg(2+).

The protein resides in the cytoplasm. It catalyses the reaction alpha-D-xylose = alpha-D-xylulofuranose. This chain is Xylose isomerase, found in Bacteroides thetaiotaomicron (strain ATCC 29148 / DSM 2079 / JCM 5827 / CCUG 10774 / NCTC 10582 / VPI-5482 / E50).